The sequence spans 447 residues: ATP-dependent protease ATPase subunit HslU (447 aa).

ATP-binding positions include Ile-18, 60 to 65 (GVGKTE), Asp-259, Glu-325, and Arg-397.

The protein belongs to the ClpX chaperone family. HslU subfamily. A double ring-shaped homohexamer of HslV is capped on each side by a ring-shaped HslU homohexamer. The assembly of the HslU/HslV complex is dependent on binding of ATP.

The protein localises to the cytoplasm. Its function is as follows. ATPase subunit of a proteasome-like degradation complex; this subunit has chaperone activity. The binding of ATP and its subsequent hydrolysis by HslU are essential for unfolding of protein substrates subsequently hydrolyzed by HslV. HslU recognizes the N-terminal part of its protein substrates and unfolds these before they are guided to HslV for hydrolysis. The sequence is that of ATP-dependent protease ATPase subunit HslU from Burkholderia cenocepacia (strain HI2424).